The sequence spans 286 residues: UDP-3-O-acyl-N-acetylglucosamine deacetylase (286 aa).

3 residues coordinate Zn(2+): H79, H237, and D241. The Proton donor role is filled by H264.

This sequence belongs to the LpxC family. It depends on Zn(2+) as a cofactor.

It carries out the reaction a UDP-3-O-[(3R)-3-hydroxyacyl]-N-acetyl-alpha-D-glucosamine + H2O = a UDP-3-O-[(3R)-3-hydroxyacyl]-alpha-D-glucosamine + acetate. Its pathway is glycolipid biosynthesis; lipid IV(A) biosynthesis; lipid IV(A) from (3R)-3-hydroxytetradecanoyl-[acyl-carrier-protein] and UDP-N-acetyl-alpha-D-glucosamine: step 2/6. Catalyzes the hydrolysis of UDP-3-O-myristoyl-N-acetylglucosamine to form UDP-3-O-myristoylglucosamine and acetate, the committed step in lipid A biosynthesis. This Chlamydia trachomatis serovar L2 (strain ATCC VR-902B / DSM 19102 / 434/Bu) protein is UDP-3-O-acyl-N-acetylglucosamine deacetylase.